The following is a 148-amino-acid chain: UPF0756 membrane protein NMC1845 (148 aa).

Transmembrane regions (helical) follow at residues 13-35 (LILLGVVSNNNSITISATILLLM), 50-70 (HGLNLGIILLTIGVLSPLVSG), 80-100 (FLNFKMISAVFIGIFVAWLAG), and 121-141 (VIGVAFMGGIPVGPLIAAGIL).

The protein belongs to the UPF0756 family.

The protein resides in the cell membrane. The polypeptide is UPF0756 membrane protein NMC1845 (Neisseria meningitidis serogroup C / serotype 2a (strain ATCC 700532 / DSM 15464 / FAM18)).